The sequence spans 431 residues: 3-phosphoshikimate 1-carboxyvinyltransferase (431 aa).

3 residues coordinate 3-phosphoshikimate: lysine 22, serine 23, and arginine 27. Residue lysine 22 coordinates phosphoenolpyruvate. Phosphoenolpyruvate-binding residues include glycine 94 and arginine 122. Residues serine 168, serine 169, glutamine 170, serine 196, aspartate 315, and lysine 342 each contribute to the 3-phosphoshikimate site. Glutamine 170 serves as a coordination point for phosphoenolpyruvate. Catalysis depends on aspartate 315, which acts as the Proton acceptor. The phosphoenolpyruvate site is built by arginine 346, arginine 390, and lysine 414.

The protein belongs to the EPSP synthase family. As to quaternary structure, monomer.

It localises to the cytoplasm. It carries out the reaction 3-phosphoshikimate + phosphoenolpyruvate = 5-O-(1-carboxyvinyl)-3-phosphoshikimate + phosphate. It participates in metabolic intermediate biosynthesis; chorismate biosynthesis; chorismate from D-erythrose 4-phosphate and phosphoenolpyruvate: step 6/7. In terms of biological role, catalyzes the transfer of the enolpyruvyl moiety of phosphoenolpyruvate (PEP) to the 5-hydroxyl of shikimate-3-phosphate (S3P) to produce enolpyruvyl shikimate-3-phosphate and inorganic phosphate. The polypeptide is 3-phosphoshikimate 1-carboxyvinyltransferase (Nitrosomonas europaea (strain ATCC 19718 / CIP 103999 / KCTC 2705 / NBRC 14298)).